An 81-amino-acid polypeptide reads, in one-letter code: Small ribosomal subunit protein bS16 (81 aa).

This sequence belongs to the bacterial ribosomal protein bS16 family.

The protein is Small ribosomal subunit protein bS16 of Caldicellulosiruptor saccharolyticus (strain ATCC 43494 / DSM 8903 / Tp8T 6331).